The sequence spans 121 residues: Large ribosomal subunit protein bL12 (121 aa).

The protein belongs to the bacterial ribosomal protein bL12 family. In terms of assembly, homodimer. Part of the ribosomal stalk of the 50S ribosomal subunit. Forms a multimeric L10(L12)X complex, where L10 forms an elongated spine to which 2 to 4 L12 dimers bind in a sequential fashion. Binds GTP-bound translation factors.

Its function is as follows. Forms part of the ribosomal stalk which helps the ribosome interact with GTP-bound translation factors. Is thus essential for accurate translation. The protein is Large ribosomal subunit protein bL12 of Shigella sonnei (strain Ss046).